Consider the following 353-residue polypeptide: Probable G-protein coupled receptor 139 (353 aa).

Residues 1–29 are Extracellular-facing; the sequence is MEHTHAHLAANSSLSWWSPGSACGLGFVP. Residue Asn11 is glycosylated (N-linked (GlcNAc...) asparagine). A helical transmembrane segment spans residues 30 to 50; sequence VVYYSLLLCLGLPANILTVII. The Cytoplasmic portion of the chain corresponds to 51–65; the sequence is LSQLVARRQKSSYNY. The helical transmembrane segment at 66 to 86 threads the bilayer; sequence LLALAAADILVLFFIVFVDFL. Topologically, residues 87-102 are extracellular; that stretch reads LEDFILNMQMPQVPDK. The helical transmembrane segment at 103 to 123 threads the bilayer; it reads IIEVLEFSSIHTSIWITVPLT. The Cytoplasmic portion of the chain corresponds to 124–148; it reads IDRYIAVCHPLKYHTVSYPARTRKV. The helical transmembrane segment at 149–169 threads the bilayer; the sequence is IVSVYITCFLTSIPYYWWPNI. Topologically, residues 170–181 are extracellular; that stretch reads WTEDYISTSVHH. A helical transmembrane segment spans residues 182 to 202; sequence VLIWIHCFTVYLVPCSIFFIL. Residues 203 to 228 lie on the Cytoplasmic side of the membrane; sequence NSIIVYKLRRKSNFRLRGYSTGKTTA. Residues 229–249 traverse the membrane as a helical segment; it reads ILFTITSIFATLWAPRIIMIL. At 250–268 the chain is on the extracellular side; sequence YHLYGAPIQNRWLVHIMSD. Residues 269–289 form a helical membrane-spanning segment; sequence IANMLALLNTAINFFLYCFIS. Residues 290 to 353 lie on the Cytoplasmic side of the membrane; sequence KRFRTMAAAT…KNGKPIKVSP (64 aa).

It belongs to the G-protein coupled receptor 1 family. As to expression, expressed almost exclusively in the brain. Detected at very low levels in the peripheral tissues.

It is found in the cell membrane. In terms of biological role, orphan receptor. Seems to act through a G(q/11)-mediated pathway. In Homo sapiens (Human), this protein is Probable G-protein coupled receptor 139 (GPR139).